Consider the following 135-residue polypeptide: Fluoride-specific ion channel FluC 1 (135 aa).

The next 4 membrane-spanning stretches (helical) occupy residues 7 to 27 (LAVG…GLVL), 32 to 52 (GFPY…PFLM), 65 to 85 (LALA…SFSV), and 96 to 116 (WSAF…LSLL). The Na(+) site is built by Gly-75 and Thr-78.

It belongs to the fluoride channel Fluc/FEX (TC 1.A.43) family.

It localises to the cell membrane. It carries out the reaction fluoride(in) = fluoride(out). With respect to regulation, na(+) is not transported, but it plays an essential structural role and its presence is essential for fluoride channel function. In terms of biological role, fluoride-specific ion channel. Important for reducing fluoride concentration in the cell, thus reducing its toxicity. This is Fluoride-specific ion channel FluC 1 from Latilactobacillus sakei subsp. sakei (strain 23K) (Lactobacillus sakei subsp. sakei).